Reading from the N-terminus, the 352-residue chain is B1 bradykinin receptor (352 aa).

Residues 1–41 (MASWPPLELQSSNQSQLFPQNATACDNAPEAWDLLHRVLPT) are Extracellular-facing. N-linked (GlcNAc...) asparagine glycans are attached at residues Asn-13 and Asn-21. The chain crosses the membrane as a helical span at residues 42–62 (FIISICSFGLLGNLFVLLVFL). Residues 63–72 (LPRRRLNVAE) lie on the Cytoplasmic side of the membrane. A helical membrane pass occupies residues 73-93 (IYLANLAASDLVFVLGLPFWA). Over 94–110 (ENIWNQFNWPFGALLCR) the chain is Extracellular. Cys-109 and Cys-188 form a disulfide bridge. The helical transmembrane segment at 111–131 (VINGIIKANLFISIFLVVAIS) threads the bilayer. The Cytoplasmic segment spans residues 132–153 (QDRYCVLVHPMASRRRQRRRQA). The chain crosses the membrane as a helical span at residues 154–174 (RVTCVLIWVVGGLLSIPTFLL). At 175-206 (RSIQAVPDLNITACILLLPHEAWHFARIVELN) the chain is on the extracellular side. N-linked (GlcNAc...) asparagine glycosylation occurs at Asn-184. A helical transmembrane segment spans residues 207–227 (ILAFLLPLAAIIFFNYHILAS). Residues 228–250 (LRGREEVSRTRCGGSKDSKTTAL) lie on the Cytoplasmic side of the membrane. Residues 251–271 (ILTLVVAFLVCWAPYHFFAFL) traverse the membrane as a helical segment. Residues 272 to 294 (EFLFQVQAVRGCFWEDFIDLGLQ) lie on the Extracellular side of the membrane. Residues 295–315 (LANFLAFTNSSLNPVIYVFVG) form a helical membrane-spanning segment. At 316 to 352 (RLFRTKVWELYKQCTPKSLAPISSSHRKEIFQLFWRN) the chain is on the cytoplasmic side. A lipid anchor (S-palmitoyl cysteine) is attached at Cys-329.

This sequence belongs to the G-protein coupled receptor 1 family. Bradykinin receptor subfamily. BDKRB1 sub-subfamily.

It localises to the cell membrane. In terms of biological role, this is a receptor for bradykinin. Could be a factor in chronic pain and inflammation. This is B1 bradykinin receptor (BDKRB1) from Macaca mulatta (Rhesus macaque).